We begin with the raw amino-acid sequence, 317 residues long: Ribosomal protein L11 methyltransferase (317 aa).

Threonine 158, glycine 179, aspartate 201, and asparagine 244 together coordinate S-adenosyl-L-methionine.

It belongs to the methyltransferase superfamily. PrmA family.

Its subcellular location is the cytoplasm. It carries out the reaction L-lysyl-[protein] + 3 S-adenosyl-L-methionine = N(6),N(6),N(6)-trimethyl-L-lysyl-[protein] + 3 S-adenosyl-L-homocysteine + 3 H(+). Methylates ribosomal protein L11. The protein is Ribosomal protein L11 methyltransferase of Streptococcus pyogenes serotype M1.